A 403-amino-acid polypeptide reads, in one-letter code: MALPPVYIVSTARTPIGSFQGSLSSLTYSDLGAHAVKAALAKVPQIKPQDVDEIVFGGVLQANVGQAPARQVALKAGLPDSIVASTINKVCASGMKAVIIGAQNIICGTSDIVVVGGAESMSNTPYYLPSARSGARYGDAIMVDGVQKDGLLDVYEEKLMGVAAEKCAKDHGFSREDQDNFAINSYKKAGKALSEGKFKSEIAPVTIKGFRGKPDTVIENDEEIGKFNEERLKSARTVFQKENGTVTAPNASKLNDGGAALVLVSEAKLKQLGLKPLAKISGWGEAARTPFDFTIAPALAVPKAVKHAGLTVDRVDFFELNEAFSVVGLANAELVNIPLEKLNVYGGAVAMGHPLGCSGARIIVTLLSVLTQEGGRFGVAGVCNGGGGASAVVIEKIDADAKL.

Residue cysteine 91 is the Acyl-thioester intermediate of the active site. Residues histidine 353 and cysteine 383 each act as proton acceptor in the active site. A Microbody targeting signal motif is present at residues 401–403 (AKL).

It belongs to the thiolase-like superfamily. Thiolase family. Multimeric.

The protein resides in the peroxisome. The enzyme catalyses 2 acetyl-CoA = acetoacetyl-CoA + CoA. It functions in the pathway metabolic intermediate biosynthesis; (R)-mevalonate biosynthesis; (R)-mevalonate from acetyl-CoA: step 1/3. The sequence is that of Acetyl-CoA acetyltransferase IA (PACTA) from Candida tropicalis (Yeast).